A 529-amino-acid chain; its full sequence is Peptide chain release factor 3 (529 aa).

The region spanning Asn11–Leu280 is the tr-type G domain. GTP is bound by residues Ser20 to Thr27, Asp88 to His92, and Asn142 to Asp145.

Belongs to the TRAFAC class translation factor GTPase superfamily. Classic translation factor GTPase family. PrfC subfamily.

It is found in the cytoplasm. Increases the formation of ribosomal termination complexes and stimulates activities of RF-1 and RF-2. It binds guanine nucleotides and has strong preference for UGA stop codons. It may interact directly with the ribosome. The stimulation of RF-1 and RF-2 is significantly reduced by GTP and GDP, but not by GMP. The protein is Peptide chain release factor 3 of Pseudoalteromonas translucida (strain TAC 125).